The chain runs to 125 residues: Glycine cleavage system H protein (125 aa).

The Lipoyl-binding domain occupies 23–104; the sequence is VVYIGITDYA…PYENWILKVK (82 aa). Position 64 is an N6-lipoyllysine (Lys64).

It belongs to the GcvH family. The glycine cleavage system is composed of four proteins: P, T, L and H. The cofactor is (R)-lipoate.

Its function is as follows. The glycine cleavage system catalyzes the degradation of glycine. The H protein shuttles the methylamine group of glycine from the P protein to the T protein. The polypeptide is Glycine cleavage system H protein (Clostridioides difficile (strain 630) (Peptoclostridium difficile)).